The sequence spans 725 residues: Ferric reduction oxidase 2 (725 aa).

The Cytoplasmic segment spans residues 1–28 (MEIEKSNNGGSNPSAGEEFKDMIKGVTK). Residues 29-48 (FLMMVIFLGTIMLWIMMPTL) form a helical membrane-spanning segment. The Extracellular portion of the chain corresponds to 49–74 (TYRTKWLPHLRIKFGTSTYFGATGTT). A helical transmembrane segment spans residues 75–93 (LFMYMFPMMVVACLGCVYL). Over 94–125 (HFKNRKSPHHIDRETKGGVWSKLRKPMLVKGP) the chain is Cytoplasmic. The chain crosses the membrane as a helical span at residues 126-149 (LGIVSVTEITFLAMFVALLLWCFI). Topologically, residues 150-217 (TYLRNSFATI…MGLTSESSIK (68 aa)) are extracellular. The Ferric oxidoreductase domain maps to 183 to 303 (LGLIGNICLA…YLYIVFMLFF (121 aa)). A helical membrane pass occupies residues 218–241 (YHIWLGHMVMALFTVHGLCYIIYW). Heme-binding residues include histidine 219 and histidine 233. Residues 242 to 291 (ASMHEISQMIMWDTKGVSNLAGEIALAAGLVMWATTYPKIRRRFFEVFFY) lie on the Cytoplasmic side of the membrane. A helical transmembrane segment spans residues 292 to 316 (THYLYIVFMLFFVLHVGISFSFIAL). Heme is bound by residues histidine 293 and histidine 306. Residues 317–338 (PGFYIFLVDRFLRFLQSRENVR) are Extracellular-facing. In terms of domain architecture, FAD-binding FR-type spans 332 to 437 (QSRENVRLLA…EGPYGPASAD (106 aa)). A helical membrane pass occupies residues 339–359 (LLAARILPSDTMELTFSKNSK). Over 360 to 554 (LVYSPTSIMF…SISSILGPNS (195 aa)) the chain is Cytoplasmic. 381 to 384 (HPFT) contributes to the FAD binding site. 429–432 (GPYG) is an NAD(+) binding site. Residues 555–577 (WLWLGAILASSFLIFMIIIGIIT) traverse the membrane as a helical segment. The Extracellular portion of the chain corresponds to 578-597 (RYYIYPIDHNTNKIYSLTSK). A helical membrane pass occupies residues 598-619 (TIIYILVISVSIMATCSAAMLW). The Cytoplasmic segment spans residues 620-725 (NKKKYGKVES…LHFESISFSW (106 aa)).

It belongs to the ferric reductase (FRE) family. The cofactor is FAD. As to expression, expressed in the epidermal cells of the roots. High expression in lateral roots and root hairs. Detected in leaves, stems, siliques and in flowers in anthers and styles.

The protein resides in the cell membrane. The enzyme catalyses 2 a Fe(II)-siderophore + NAD(+) + H(+) = 2 a Fe(III)-siderophore + NADH. Its function is as follows. Flavocytochrome that transfers electrons across the plasma membrane to reduce ferric iron chelates to form soluble ferrous iron in the rhizosphere. May be involved in the delivery of iron to developing pollen grains. Also acts as a copper-chelate reductase. Involved in glycine betaine-mediated chilling tolerance and reactive oxygen species accumulation. The polypeptide is Ferric reduction oxidase 2 (FRO2) (Arabidopsis thaliana (Mouse-ear cress)).